Consider the following 2828-residue polypeptide: Matrix-remodeling-associated protein 5 (2828 aa).

Positions 1–26 are cleaved as a signal peptide; the sequence is MPKRAHWGALSVVLILLWGHPRVALA. The region spanning 27–55 is the LRRNT domain; that stretch reads CPHPCACYVPSEVHCTFRSLASVPAGIAK. 6 LRR repeats span residues 56 to 77, 80 to 101, 104 to 125, 128 to 149, 152 to 173, and 184 to 205; these read HVERINLGFNSIQALSETSFAG, KLELLMIHGNEIPSIPDGALRD, SLQVFKFSYNKLRVITGQTLQG, NLMRLHIDHNKIEFIHPQAFNG, SLRLLHLEGNLLHQLHPSTFST, and TIRHLYLAENMVRTLPASMLRN. The LRRCT domain occupies 217-277; that stretch reads NPWTCDCEMR…HKLKDMTCLK (61 aa). N287 and N321 each carry an N-linked (GlcNAc...) asparagine glycan. 2 Ig-like C2-type domains span residues 481–571 and 575–669; these read PSGA…YRVL and PSTQ…ITVT. 2 disulfides stabilise this stretch: C501/C555 and C599/C651. The N-linked (GlcNAc...) asparagine glycan is linked to N633. Disordered stretches follow at residues 671–715, 933–962, 1068–1190, 1204–1275, and 1367–1389; these read KGSG…RRLL, KPTHEETATEGWSAADVGSSPEPTSSEYEP, QGGN…APDI, AWVD…SSET, and EESSPVGFPGTPTWNPSRTAQPG. Positions 695-708 are enriched in acidic residues; it reads IVEDEGGSGMGDEE. O-linked (Xyl...) (chondroitin sulfate) serine glycosylation occurs at S702. Over residues 951-962 the composition is skewed to low complexity; that stretch reads SSPEPTSSEYEP. Polar residues predominate over residues 1090 to 1107; the sequence is SKSITLPDSTLGIMSSMS. Over residues 1146–1168 the composition is skewed to basic residues; sequence PSRRRPNGRRRLRPNKFRHRHKQ. Polar residues-rich tracts occupy residues 1169–1190 and 1204–1214; these read TPPTTFAPSETFSTQPTQAPDI and AWVDNTVNTPK. Positions 1229 to 1243 are enriched in basic residues; it reads TPRRKHGKRPNKHRY. N1403 carries an N-linked (GlcNAc...) asparagine glycan. An LRR 7 repeat occupies 1410 to 1434; that stretch reads LKELEDVDFTSEFLSSLTVSTPFHQ. Disordered stretches follow at residues 1479–1499, 1536–1566, 1579–1603, 1669–1689, and 1700–1719; these read QNHTPTAARMKEPASSSPSTI, NPETEATPVNNEGTQHMSGPNELSTPSSDQD, QVFGSRSLPRGPDSQRQDGRVHASH, STTIPLPLHMSKPSIPSKFTD, and KVFGNNNIPEARNPVGKPPS. Residues 1542–1566 are compositionally biased toward polar residues; that stretch reads TPVNNEGTQHMSGPNELSTPSSDQD. A glycan (N-linked (GlcNAc...) asparagine) is linked at N1735. 10 consecutive Ig-like C2-type domains span residues 1853–1946, 1950–2041, 2046–2140, 2146–2239, 2242–2343, 2345–2432, 2440–2534, 2542–2630, 2637–2722, and 2733–2828; these read PQIL…LSVT, PQIL…IRLH, PPVI…LNVQ, ARIT…VDVV, PAKI…KVVT, PATI…KTVW, PKIN…LQLT, PIFH…RLVS, PEAN…PSVT, and PRIT…IHVF. 2 disulfides stabilise this stretch: C1875–C1928 and C1972–C2025. Residues N2007 and N2056 are each glycosylated (N-linked (GlcNAc...) asparagine). 8 disulfides stabilise this stretch: C2069/C2122, C2168/C2221, C2265/C2324, C2368/C2418, C2466/C2518, C2564/C2616, C2659/C2711, and C2755/C2810. N-linked (GlcNAc...) asparagine glycosylation is present at N2693.

As to expression, detected in placenta (at protein level). Detected in cerebrospinal fluid and fibroblasts (at protein level). Highly expressed in kidney, also detected on liver and spleen. Expressed by proximal tubular cells of the kidney (at protein level). Expression highly increases during chronic kidney disease and autosomal dominant polycystic kidney disease, where is detected in cysts.

It localises to the secreted. Functionally, in kidney, has anti-inflammatory and anti-fibrotic properties by limiting the induction of chemokines, fibronectin and collagen expression in response to TGB1 and pro-inflammatory stimuli. This is Matrix-remodeling-associated protein 5 (MXRA5) from Homo sapiens (Human).